An 843-amino-acid chain; its full sequence is Pentatricopeptide repeat-containing protein At4g21880, mitochondrial (843 aa).

PPR repeat units follow at residues 392–426 (SSTS…GLVI), 427–461 (SANI…SVKP), 462–496 (NSET…NLAP), 497–531 (NSSM…DVKP), 532–562 (DSVT…AGVE), 564–594 (NKHV…LEVP), and 598–632 (HNEL…RCPV).

It belongs to the PPR family. P subfamily.

The protein localises to the mitochondrion. The polypeptide is Pentatricopeptide repeat-containing protein At4g21880, mitochondrial (Arabidopsis thaliana (Mouse-ear cress)).